A 585-amino-acid polypeptide reads, in one-letter code: Acetolactate synthase large subunit (585 aa).

Glutamate 60 serves as a coordination point for thiamine diphosphate. FAD contacts are provided by residues arginine 162, 272–293, and 315–334; these read HGTA…LGAR and DIDP…IISD. Positions 407–486 are thiamine pyrophosphate binding; it reads QHQMWAAQFL…IKIFIINNQW (80 aa). Positions 457 and 484 each coordinate Mg(2+).

It belongs to the TPP enzyme family. Dimer of large and small chains. It depends on Mg(2+) as a cofactor. Thiamine diphosphate is required as a cofactor.

The protein resides in the plastid. The protein localises to the chloroplast. It catalyses the reaction 2 pyruvate + H(+) = (2S)-2-acetolactate + CO2. Its pathway is amino-acid biosynthesis; L-isoleucine biosynthesis; L-isoleucine from 2-oxobutanoate: step 1/4. It participates in amino-acid biosynthesis; L-valine biosynthesis; L-valine from pyruvate: step 1/4. This chain is Acetolactate synthase large subunit (ilvB), found in Cyanidium caldarium (Red alga).